The sequence spans 184 residues: Elongation factor P (184 aa).

The protein belongs to the elongation factor P family.

It localises to the cytoplasm. It participates in protein biosynthesis; polypeptide chain elongation. Functionally, involved in peptide bond synthesis. Stimulates efficient translation and peptide-bond synthesis on native or reconstituted 70S ribosomes in vitro. Probably functions indirectly by altering the affinity of the ribosome for aminoacyl-tRNA, thus increasing their reactivity as acceptors for peptidyl transferase. The chain is Elongation factor P from Thermus thermophilus (strain ATCC BAA-163 / DSM 7039 / HB27).